Consider the following 348-residue polypeptide: Dihydroorotate dehydrogenase (quinone) (348 aa).

FMN contacts are provided by residues 65–69 (AGLDK) and Thr89. Substrate is bound at residue Lys69. Residue 114 to 118 (NRLGF) coordinates substrate. Asn147 and Asn180 together coordinate FMN. Residue Asn180 coordinates substrate. The active-site Nucleophile is Ser183. A substrate-binding site is contributed by Asn185. Positions 225 and 253 each coordinate FMN. Position 254–255 (254–255 (NT)) interacts with substrate. FMN-binding positions include Gly276, Gly305, and 326 to 327 (YS).

Belongs to the dihydroorotate dehydrogenase family. Type 2 subfamily. Monomer. The cofactor is FMN.

It localises to the cell membrane. The enzyme catalyses (S)-dihydroorotate + a quinone = orotate + a quinol. It participates in pyrimidine metabolism; UMP biosynthesis via de novo pathway; orotate from (S)-dihydroorotate (quinone route): step 1/1. Its function is as follows. Catalyzes the conversion of dihydroorotate to orotate with quinone as electron acceptor. The chain is Dihydroorotate dehydrogenase (quinone) from Delftia acidovorans (strain DSM 14801 / SPH-1).